Here is a 171-residue protein sequence, read N- to C-terminus: Nicotinamide-nucleotide adenylyltransferase (171 aa).

It belongs to the archaeal NMN adenylyltransferase family.

Its subcellular location is the cytoplasm. The catalysed reaction is beta-nicotinamide D-ribonucleotide + ATP + H(+) = diphosphate + NAD(+). Its pathway is cofactor biosynthesis; NAD(+) biosynthesis; NAD(+) from nicotinamide D-ribonucleotide: step 1/1. In Methanococcus maripaludis (strain C5 / ATCC BAA-1333), this protein is Nicotinamide-nucleotide adenylyltransferase.